The following is a 691-amino-acid chain: Elongation factor G (691 aa).

One can recognise a tr-type G domain in the interval 8 to 282; that stretch reads ERVRNIGIAA…AVIDYLPAPI (275 aa). GTP is bound by residues 17 to 24, 81 to 85, and 135 to 138; these read AHIDAGKT, DTPGH, and NKMD.

The protein belongs to the TRAFAC class translation factor GTPase superfamily. Classic translation factor GTPase family. EF-G/EF-2 subfamily.

The protein localises to the cytoplasm. In terms of biological role, catalyzes the GTP-dependent ribosomal translocation step during translation elongation. During this step, the ribosome changes from the pre-translocational (PRE) to the post-translocational (POST) state as the newly formed A-site-bound peptidyl-tRNA and P-site-bound deacylated tRNA move to the P and E sites, respectively. Catalyzes the coordinated movement of the two tRNA molecules, the mRNA and conformational changes in the ribosome. The polypeptide is Elongation factor G (Prochlorococcus marinus (strain SARG / CCMP1375 / SS120)).